A 291-amino-acid chain; its full sequence is Quinol oxidase subunit 2 (291 aa).

Residues 1–28 (MQLKKAFWKLASLLPLSLLLFLGGCDKK) form the signal peptide. 2 helical membrane-spanning segments follow: residues 49–69 (SFLL…VILI) and 91–111 (LEII…IPTV).

It belongs to the cytochrome c oxidase subunit 2 family.

Its subcellular location is the cell membrane. The enzyme catalyses 2 a quinol + O2 = 2 a quinone + 2 H2O. Its function is as follows. Catalyzes quinol oxidation with the concomitant reduction of oxygen to water. Subunit II transfers the electrons from a quinol to the binuclear center of the catalytic subunit I. The sequence is that of Quinol oxidase subunit 2 from Bacillus cereus (strain ATCC 14579 / DSM 31 / CCUG 7414 / JCM 2152 / NBRC 15305 / NCIMB 9373 / NCTC 2599 / NRRL B-3711).